The chain runs to 120 residues: Phosphoribosyl-ATP pyrophosphatase (120 aa).

Residues 97-120 are disordered; sequence REGTSGLVEKASRPAKKDSGTADS. Over residues 106–120 the composition is skewed to basic and acidic residues; the sequence is KASRPAKKDSGTADS.

It belongs to the PRA-PH family.

The protein resides in the cytoplasm. The enzyme catalyses 1-(5-phospho-beta-D-ribosyl)-ATP + H2O = 1-(5-phospho-beta-D-ribosyl)-5'-AMP + diphosphate + H(+). It participates in amino-acid biosynthesis; L-histidine biosynthesis; L-histidine from 5-phospho-alpha-D-ribose 1-diphosphate: step 2/9. The sequence is that of Phosphoribosyl-ATP pyrophosphatase from Rhodopirellula baltica (strain DSM 10527 / NCIMB 13988 / SH1).